We begin with the raw amino-acid sequence, 339 residues long: tRNA N6-adenosine threonylcarbamoyltransferase (339 aa).

Positions 107 and 111 each coordinate Fe cation. Substrate contacts are provided by residues 129–133, aspartate 162, glycine 175, and asparagine 279; that span reads LVSGG. Aspartate 307 serves as a coordination point for Fe cation.

Belongs to the KAE1 / TsaD family. Fe(2+) is required as a cofactor.

It is found in the cytoplasm. The catalysed reaction is L-threonylcarbamoyladenylate + adenosine(37) in tRNA = N(6)-L-threonylcarbamoyladenosine(37) in tRNA + AMP + H(+). In terms of biological role, required for the formation of a threonylcarbamoyl group on adenosine at position 37 (t(6)A37) in tRNAs that read codons beginning with adenine. Is involved in the transfer of the threonylcarbamoyl moiety of threonylcarbamoyl-AMP (TC-AMP) to the N6 group of A37, together with TsaE and TsaB. TsaD likely plays a direct catalytic role in this reaction. The sequence is that of tRNA N6-adenosine threonylcarbamoyltransferase from Campylobacter curvus (strain 525.92).